The chain runs to 181 residues: uncharacterized protein (181 aa).

This is an uncharacterized protein from Acanthamoeba polyphaga (Amoeba).